The sequence spans 412 residues: ATP phosphoribosyltransferase regulatory subunit (412 aa).

Belongs to the class-II aminoacyl-tRNA synthetase family. HisZ subfamily. As to quaternary structure, heteromultimer composed of HisG and HisZ subunits.

It is found in the cytoplasm. It functions in the pathway amino-acid biosynthesis; L-histidine biosynthesis; L-histidine from 5-phospho-alpha-D-ribose 1-diphosphate: step 1/9. Required for the first step of histidine biosynthesis. May allow the feedback regulation of ATP phosphoribosyltransferase activity by histidine. This chain is ATP phosphoribosyltransferase regulatory subunit, found in Dehalococcoides mccartyi (strain ATCC BAA-2100 / JCM 16839 / KCTC 5957 / BAV1).